Reading from the N-terminus, the 334-residue chain is Uroporphyrinogen decarboxylase (334 aa).

Residues 22–26 (RQVGR), D71, Y140, S195, and H310 contribute to the substrate site.

This sequence belongs to the uroporphyrinogen decarboxylase family. As to quaternary structure, homodimer.

It is found in the cytoplasm. The catalysed reaction is uroporphyrinogen III + 4 H(+) = coproporphyrinogen III + 4 CO2. The protein operates within porphyrin-containing compound metabolism; protoporphyrin-IX biosynthesis; coproporphyrinogen-III from 5-aminolevulinate: step 4/4. In terms of biological role, catalyzes the decarboxylation of four acetate groups of uroporphyrinogen-III to yield coproporphyrinogen-III. This is Uroporphyrinogen decarboxylase from Chlamydia muridarum (strain MoPn / Nigg).